The chain runs to 103 residues: Matrix Gla protein (103 aa).

The N-terminal stretch at 1–19 (MKSLLPLAILAALAVAALC) is a signal peptide. The residue at position 21 (E21) is a 4-carboxyglutamate. Residues S22, S25, and S28 each carry the phosphoserine modification. Residues 51–97 (HAKAQERVRELNKPAQEINREACDDYKLCERYALIYGYNAAYNRYFR) form the Gla domain. 4 positions are modified to 4-carboxyglutamate: E56, E60, E67, and E71. A disulfide bridge connects residues C73 and C79.

The protein belongs to the osteocalcin/matrix Gla protein family. Requires vitamin K-dependent gamma-carboxylation for its function.

It localises to the secreted. Functionally, associates with the organic matrix of bone and cartilage. Thought to act as an inhibitor of bone formation. The protein is Matrix Gla protein (Mgp) of Rattus norvegicus (Rat).